Reading from the N-terminus, the 910-residue chain is DNA mismatch repair protein MutS (910 aa).

The span at 1–11 shows a compositional bias: basic and acidic residues; that stretch reads MEAKVEEKEPE. The interval 1-21 is disordered; it reads MEAKVEEKEPEPVENAGPDAP. 658 to 665 contributes to the ATP binding site; that stretch reads GPNMGGKS.

This sequence belongs to the DNA mismatch repair MutS family.

Functionally, this protein is involved in the repair of mismatches in DNA. It is possible that it carries out the mismatch recognition step. This protein has a weak ATPase activity. This Brucella suis (strain ATCC 23445 / NCTC 10510) protein is DNA mismatch repair protein MutS.